A 428-amino-acid polypeptide reads, in one-letter code: Putative zinc metalloprotease SACOL1281 (428 aa).

Histidine 21 lines the Zn(2+) pocket. The active site involves glutamate 22. Zn(2+) is bound at residue histidine 25. Helical transmembrane passes span 172-194 (FLTL…IGLA), 309-331 (GSTY…GFSF), 352-374 (IISL…LIPI), and 401-420 (TTII…LVTW). The 84-residue stretch at 186–269 (ALVLFIGLAY…TKSVELTPKK (84 aa)) folds into the PDZ domain.

Belongs to the peptidase M50B family. Requires Zn(2+) as cofactor.

It is found in the cell membrane. The sequence is that of Putative zinc metalloprotease SACOL1281 from Staphylococcus aureus (strain COL).